Consider the following 149-residue polypeptide: GATA transcription factor 15 (149 aa).

Over residues 1-10 the composition is skewed to basic and acidic residues; sequence MLDPTEKVID. Disordered regions lie at residues 1–41 and 76–102; these read MLDP…NEKK and RRTLISNRSEDKKKKSHNRNPKFGDSL. The GATA-type zinc-finger motif lies at 37-91; it reads SNEKKSCAICGTSKTPLWRGGPAGPKSLCNACGIRNRKKRRTLISNRSEDKKKKS.

Belongs to the type IV zinc-finger family. Class B subfamily.

The protein resides in the nucleus. Its function is as follows. Transcriptional regulator that specifically binds 5'-GATA-3' or 5'-GAT-3' motifs within gene promoters. The protein is GATA transcription factor 15 (GATA15) of Arabidopsis thaliana (Mouse-ear cress).